A 548-amino-acid polypeptide reads, in one-letter code: Sterol esterase TGL1 (548 aa).

M1 bears the N-acetylmethionine; partial mark. Residues 1-13 (MYFPFLGRLSITD) are Lumenal-facing. A helical transmembrane segment spans residues 14 to 34 (YIIVVLVYIESIISSVLKLIP). At 35-548 (QPMINLFEWL…TTALDALNKE (514 aa)) the chain is on the cytoplasmic side. One can recognise an AB hydrolase-1 domain in the interval 107-402 (VVYLHHGLLM…NYEHLDLIWG (296 aa)). The GXSXG signature appears at 199-203 (GFSQG). S201 serves as the catalytic Nucleophile. K246 is covalently cross-linked (Glycyl lysine isopeptide (Lys-Gly) (interchain with G-Cter in ubiquitin)). Active-site charge relay system residues include D369 and H396. Disordered stretches follow at residues 449-477 (TTHPTHGLSYRTHSADRSPLSVQADEADE) and 496-516 (IDEDNENEHQDDTEDQIHKEQ). S462 and S466 each carry phosphoserine. Residues 502–516 (NEHQDDTEDQIHKEQ) show a composition bias toward basic and acidic residues. A phosphoserine mark is found at S521 and S538. The tract at residues 528 to 548 (KDLRQLDANSSTTALDALNKE) is disordered. Phosphothreonine is present on T539.

The protein belongs to the AB hydrolase superfamily. In terms of processing, not N-glycosylated.

It localises to the lipid droplet. The protein localises to the membrane. It catalyses the reaction a sterol ester + H2O = a sterol + a fatty acid + H(+). Its function is as follows. Mediates the hydrolysis of steryl esters (SE). Preferentially hydrolyzes ergosteryl and zymosteryl esters. Required for mobilization of SEs from lipid particles/droplets, thereby playing a central role in lipid metabolism and sterol homeostasis. Sterol intermediates stored in SE and set free by SE hydrolases are recycled to the sterol biosynthetic pathway and converted to the final product, ergosterol, in the endoplasmic reticulum. Also has weak lipase activity toward triglycerides at neutral pH, however, the physiological relevance of this activity is unclear. This Saccharomyces cerevisiae (strain ATCC 204508 / S288c) (Baker's yeast) protein is Sterol esterase TGL1 (TGL1).